The following is a 933-amino-acid chain: MQHYDIIRMIGKGGMGEVYLAYDPICSRKVALKRIREDLSDNELLKKRFLREAKIAADLVHPGVVPVFTICSDSDLVYYTMPYIEGYTLKSLLKSVWQCDSLPKDLAEQTSVGTFLSIFHKICSTIEYVHSRGILHRDLKPDNILLGLFSEVVILDWGAALSKEMKEDVLLDLDIPMPGSMFSNMTVPGKIVGTPDYMAPERLRGAPASESTDIYALGVILYQMLTLSFPYRNKKGKKIHVPNHIISPEEVAPHREIPSFLSQVVMRALATDPKERYTSVQALKADIEQHLQGSPQWTPKIALHTQDAECWKFHESILLSKYFPMLEVSPALWYSLAISKIESFSEVRLEYTLLRKGLEGGFGILLPPSENVDHGDFYRGYGFWLHIKKNVLSVSLVRNGLEIQKTSGNIDVNQEKFFIAFEKQNHRLSLNIDHTVWMIHMDYLPGRGGRIGVIIQDITDVCGNIVVLESSGALHVSCLAVPDAFLNEKLYDRAITFYRRIVESFPGRKEGYEAQFRIGIAVLEKAAEEGDQEGFSQALREFSVLHDSVAAPLEYLGKALVYQRLEEYNEEVKSLLLALKRYGQRPEISRVRDHVVDRLHEALYSNHRVSLVFMLLALHVAPESINSSEEEHFLKNLQGKIHDTLFCSLDISPIDFRSSKMELLLSYWSGFTPFLPGLFQRSWDLKDYRALADIFYTAADLGEREFIDVYGNTLRENIQATTFTEDIVEIFPHQLIHFLSALDAIFLHAPVEKIFSDVDILDPVLIIYLFDLFAKDVLIHGKGEQILDAIQVLETYVSPQQRHTYLLPYEILAYLWMKEGKKVHELLSAHYDESFWIEDSHWAFVLYGYWLALTEESSLAYLHLSGCREDHVAPRALIGLFCSPLGICENQWSYQERRNLLLQKFIFFHCLGDDVERDNCRVAYDLLVKERLL.

The region spanning 4–291 (YDIIRMIGKG…ALKADIEQHL (288 aa)) is the Protein kinase domain. Residues 10 to 18 (IGKGGMGEV) and Lys33 contribute to the ATP site. Catalysis depends on Asp138, which acts as the Proton acceptor.

It belongs to the protein kinase superfamily. Ser/Thr protein kinase family. Autophosphorylated on serine and threonine residues.

The catalysed reaction is L-seryl-[protein] + ATP = O-phospho-L-seryl-[protein] + ADP + H(+). The enzyme catalyses L-threonyl-[protein] + ATP = O-phospho-L-threonyl-[protein] + ADP + H(+). Together with the serine/threonine kinase Pkn1, may play a role in the specific interactions with host proteins during intracellular growth. This is Serine/threonine-protein kinase PknD from Chlamydia abortus (strain DSM 27085 / S26/3) (Chlamydophila abortus).